A 25-amino-acid chain; its full sequence is Secapin-1 (25 aa).

Cysteines 9 and 20 form a disulfide.

As to expression, expressed by the venom gland.

The protein resides in the secreted. Its function is as follows. Serine protease inhibitor which exhibits antifibrinolytic, antielastolytic and antimicrobial activities. Displays antimicrobial activity against bacteria and fungi. Likely functions in the innate immune response to microbial infection and possibly in the venom, as an antifibrinolytic agent. The chain is Secapin-1 from Apis mellifera (Honeybee).